Reading from the N-terminus, the 355-residue chain is C-C chemokine receptor type 1 (355 aa).

Over 1–34 (METPDTTENYDMITEFDYGDATPCHKVNERAILA) the chain is Extracellular. A helical transmembrane segment spans residues 35 to 60 (QLLPPLYSLVFVIGVVGNLLVVLVLV). The Cytoplasmic portion of the chain corresponds to 61–64 (QYKR). A helical transmembrane segment spans residues 65–91 (LKNMTNIYLLNLAISDLLFLFTLPFLI). Residues 92–107 (YYKSTDDWIFGDAMCK) lie on the Extracellular side of the membrane. C106 and C183 are joined by a disulfide. The helical transmembrane segment at 108–129 (ILSGFYYTGLYSEIFFIILLTI) threads the bilayer. The Cytoplasmic segment spans residues 130-146 (DRYLAIVHAVFALRART). A helical transmembrane segment spans residues 147-171 (VTFGVITSIIIWALAILASSPLMYF). Over 172-197 (SKTQWNIVRHSCNLHFPYESFQQWKL) the chain is Extracellular. The helical transmembrane segment at 198–223 (FQALKLNLFGLVLPLLVMIVCYTGII) threads the bilayer. Residues 224 to 239 (KILLRRPNEKKSKAVR) lie on the Cytoplasmic side of the membrane. A helical membrane pass occupies residues 240–264 (LIFVIMIIFFLFWTPYNLTELISVF). Topologically, residues 265–281 (QEFLFTHLCEQNRQLDL) are extracellular. The chain crosses the membrane as a helical span at residues 282–305 (AMEVTEVIANMHCCVNPVIYAFAG). The Cytoplasmic portion of the chain corresponds to 306-355 (ERFRKYLRQLFHRRVAVHLVKWLPFLSGDRLERVSSTSPSTGEHELSAGL).

Belongs to the G-protein coupled receptor 1 family. Interacts with CREB3. Interacts with CCL3. Interacts with CCL15. Interacts with CCL23. Interacts with GNAI1. Interacts with PF4/CXCL4.

It is found in the cell membrane. Functionally, chemokine receptor that plays a crucial role in regulating immune cell migration, inflammation, and immune responses. Contributes to the inflammatory response by recruiting immune cells, such as monocytes, macrophages, T-cells, and dendritic cells, to sites of inflammation for the clearance of pathogens and the resolution of tissue damage. When activated by its ligands including CCL3, CCL5-9, CCL13-16 and CCL23, triggers a signaling cascade within immune cells, leading to their migration towards the source of the chemokine. For example, mediates neutrophil migration after activation by CCL3 leading to the sequential release of TNF-alpha and leukotriene B4. Also mediates monocyte migration upon CXCL4 binding. Activation by CCL5 results in neuroinflammation through the ERK1/2 signaling pathway. This chain is C-C chemokine receptor type 1 (CCR1), found in Macaca fascicularis (Crab-eating macaque).